The sequence spans 423 residues: Enolase (423 aa).

Residue glutamine 165 coordinates (2R)-2-phosphoglycerate. Glutamate 209 serves as the catalytic Proton donor. Mg(2+) contacts are provided by aspartate 244, glutamate 285, and aspartate 310. (2R)-2-phosphoglycerate is bound by residues lysine 335, arginine 364, serine 365, and lysine 386. The active-site Proton acceptor is the lysine 335.

The protein belongs to the enolase family. As to quaternary structure, homooctamer formed by a tetramer of dimers. Requires Mg(2+) as cofactor.

Its subcellular location is the cytoplasm. The protein resides in the secreted. It localises to the cell surface. It catalyses the reaction (2R)-2-phosphoglycerate = phosphoenolpyruvate + H2O. It participates in carbohydrate degradation; glycolysis; pyruvate from D-glyceraldehyde 3-phosphate: step 4/5. Its activity is regulated as follows. The covalent binding to the substrate causes inactivation of the enzyme, and possibly serves as a signal for the export of the protein. Its function is as follows. Catalyzes the reversible conversion of 2-phosphoglycerate (2-PG) into phosphoenolpyruvate (PEP). It is essential for the degradation of carbohydrates via glycolysis. The polypeptide is Enolase (Methanocaldococcus jannaschii (strain ATCC 43067 / DSM 2661 / JAL-1 / JCM 10045 / NBRC 100440) (Methanococcus jannaschii)).